The following is a 398-amino-acid chain: Na(+)/H(+) antiporter NhaA (398 aa).

12 helical membrane-spanning segments follow: residues Ala-21–Leu-41, Leu-56–Leu-76, Val-94–Ile-114, Gly-124–Gly-144, Val-153–Phe-173, Ser-176–Leu-196, Val-201–Ser-221, Ile-263–Gly-283, Leu-284–Gly-304, Leu-306–Ala-326, Met-333–Leu-353, and Val-367–Ala-387.

Belongs to the NhaA Na(+)/H(+) (TC 2.A.33) antiporter family.

It localises to the cell inner membrane. It carries out the reaction Na(+)(in) + 2 H(+)(out) = Na(+)(out) + 2 H(+)(in). Na(+)/H(+) antiporter that extrudes sodium in exchange for external protons. This is Na(+)/H(+) antiporter NhaA from Mesorhizobium japonicum (strain LMG 29417 / CECT 9101 / MAFF 303099) (Mesorhizobium loti (strain MAFF 303099)).